The following is a 96-amino-acid chain: Putative toxin Y4kP (96 aa).

This sequence belongs to the RelE toxin family.

In terms of biological role, toxic component of a type II toxin-antitoxin (TA) system. This chain is Putative toxin Y4kP, found in Sinorhizobium fredii (strain NBRC 101917 / NGR234).